The chain runs to 187 residues: uncharacterized protein (187 aa).

A helical transmembrane segment spans residues 8–28 (ITFFIILLICLICILLLLVVF). Residues 99–153 (PLENRRDMEAEEENQINEKQEPENAGETGQEEDDGLQKIHTSVTRTPSVVESQKR) are disordered. Polar residues predominate over residues 137-149 (IHTSVTRTPSVVE).

Its subcellular location is the membrane. This is an uncharacterized protein from Homo sapiens (Human).